A 469-amino-acid polypeptide reads, in one-letter code: Tubulin gamma-2 chain (469 aa).

A GTP-binding site is contributed by 142 to 148 (AGGTGSG).

This sequence belongs to the tubulin family.

Its subcellular location is the cytoplasm. The protein localises to the cytoskeleton. It localises to the microtubule organizing center. In terms of biological role, tubulin is the major constituent of microtubules. The gamma chain is found at microtubule organizing centers (MTOC) such as the spindle poles, suggesting that it is involved in the minus-end nucleation of microtubule assembly. The protein is Tubulin gamma-2 chain (TUBG2) of Zea mays (Maize).